Reading from the N-terminus, the 303-residue chain is N-acetyl-D-glucosamine kinase (303 aa).

ATP-binding positions include 4 to 11 (GFDIGGTK) and 133 to 140 (GVGGGLIF). Zn(2+) contacts are provided by His-157, Cys-177, Cys-179, and Cys-184.

It belongs to the ROK (NagC/XylR) family. NagK subfamily.

The catalysed reaction is N-acetyl-D-glucosamine + ATP = N-acetyl-D-glucosamine 6-phosphate + ADP + H(+). The protein operates within cell wall biogenesis; peptidoglycan recycling. In terms of biological role, catalyzes the phosphorylation of N-acetyl-D-glucosamine (GlcNAc) derived from cell-wall degradation, yielding GlcNAc-6-P. This is N-acetyl-D-glucosamine kinase from Escherichia coli O157:H7.